A 96-amino-acid polypeptide reads, in one-letter code: uncharacterized protein (96 aa).

Residues 1 to 23 (MKQFYSVVLTIIIYISSQSNVVS) form the signal peptide. Disulfide bonds link cysteine 60–cysteine 74, cysteine 67–cysteine 78, and cysteine 73–cysteine 83.

Its subcellular location is the secreted. This is an uncharacterized protein from Schistosoma japonicum (Blood fluke).